The primary structure comprises 278 residues: NADPH-dependent 7-cyano-7-deazaguanine reductase (278 aa).

Substrate is bound at residue 87-89; that stretch reads IES. 89 to 90 is an NADPH binding site; it reads SK. Cys-185 functions as the Thioimide intermediate in the catalytic mechanism. The Proton donor role is filled by Asp-192. 224–225 contacts substrate; the sequence is HE. 253 to 254 contacts NADPH; the sequence is RG. Positions 255-278 are disordered; the sequence is GLDINPYRSTNPTFSVQNHRSFRQ. Positions 261 to 278 are enriched in polar residues; it reads YRSTNPTFSVQNHRSFRQ.

Belongs to the GTP cyclohydrolase I family. QueF type 2 subfamily. As to quaternary structure, homodimer.

It localises to the cytoplasm. The catalysed reaction is 7-aminomethyl-7-carbaguanine + 2 NADP(+) = 7-cyano-7-deazaguanine + 2 NADPH + 3 H(+). The protein operates within tRNA modification; tRNA-queuosine biosynthesis. In terms of biological role, catalyzes the NADPH-dependent reduction of 7-cyano-7-deazaguanine (preQ0) to 7-aminomethyl-7-deazaguanine (preQ1). In Coxiella burnetii (strain Dugway 5J108-111), this protein is NADPH-dependent 7-cyano-7-deazaguanine reductase.